The chain runs to 102 residues: Large ribosomal subunit protein uL24 (102 aa).

The protein belongs to the universal ribosomal protein uL24 family. Part of the 50S ribosomal subunit.

In terms of biological role, one of two assembly initiator proteins, it binds directly to the 5'-end of the 23S rRNA, where it nucleates assembly of the 50S subunit. One of the proteins that surrounds the polypeptide exit tunnel on the outside of the subunit. In Burkholderia ambifaria (strain ATCC BAA-244 / DSM 16087 / CCUG 44356 / LMG 19182 / AMMD) (Burkholderia cepacia (strain AMMD)), this protein is Large ribosomal subunit protein uL24.